We begin with the raw amino-acid sequence, 308 residues long: Methionyl-tRNA formyltransferase (308 aa).

109 to 112 contributes to the (6S)-5,6,7,8-tetrahydrofolate binding site; sequence SLLP.

This sequence belongs to the Fmt family.

The catalysed reaction is L-methionyl-tRNA(fMet) + (6R)-10-formyltetrahydrofolate = N-formyl-L-methionyl-tRNA(fMet) + (6S)-5,6,7,8-tetrahydrofolate + H(+). In terms of biological role, attaches a formyl group to the free amino group of methionyl-tRNA(fMet). The formyl group appears to play a dual role in the initiator identity of N-formylmethionyl-tRNA by promoting its recognition by IF2 and preventing the misappropriation of this tRNA by the elongation apparatus. In Salinispora arenicola (strain CNS-205), this protein is Methionyl-tRNA formyltransferase.